The chain runs to 216 residues: Probable nicotinate-nucleotide adenylyltransferase (216 aa).

The protein belongs to the NadD family.

It catalyses the reaction nicotinate beta-D-ribonucleotide + ATP + H(+) = deamido-NAD(+) + diphosphate. The protein operates within cofactor biosynthesis; NAD(+) biosynthesis; deamido-NAD(+) from nicotinate D-ribonucleotide: step 1/1. Catalyzes the reversible adenylation of nicotinate mononucleotide (NaMN) to nicotinic acid adenine dinucleotide (NaAD). The protein is Probable nicotinate-nucleotide adenylyltransferase of Geobacillus thermodenitrificans (strain NG80-2).